A 282-amino-acid polypeptide reads, in one-letter code: Kanosamine-6-phosphate phosphatase (282 aa).

Catalysis depends on aspartate 25, which acts as the Nucleophile. Mg(2+) contacts are provided by aspartate 25 and aspartate 27. Lysine 209 serves as a coordination point for phosphate. Residues aspartate 232 and serine 233 each contribute to the Mg(2+) site. Residue asparagine 235 participates in phosphate binding.

It belongs to the HAD-like hydrolase superfamily. Cof family. As to quaternary structure, homotetramer. Mg(2+) serves as cofactor.

The enzyme catalyses D-kanosamine 6-phosphate + H2O = kanosamine + phosphate. The protein operates within antibiotic biosynthesis; kanosamine biosynthesis. In terms of biological role, involved in the biosynthesis of kanosamine (3-amino-3-deoxy-D-glucose), which is known to have antibiotic and antifungal properties, and to be a precursor of the antibiotic neotrehalosadiamine (3,3'-diamino-3,3'-dideoxy-alpha,beta-trehalose (NTD)). Catalyzes the dephosphorylation of kanosamine 6-phosphate to yield kanosamine. There is a trace amount of activity using glucosamine-6-phosphate. The protein is Kanosamine-6-phosphate phosphatase (ntdB) of Bacillus subtilis (strain 168).